The sequence spans 149 residues: Large ribosomal subunit protein bL9 (149 aa).

Belongs to the bacterial ribosomal protein bL9 family.

Binds to the 23S rRNA. This chain is Large ribosomal subunit protein bL9, found in Actinobacillus pleuropneumoniae serotype 3 (strain JL03).